Consider the following 431-residue polypeptide: 5-methylthioadenosine/S-adenosylhomocysteine deaminase (431 aa).

Residues H66 and H68 each contribute to the Zn(2+) site. Residues E95, R147, and H185 each coordinate substrate. H212 is a binding site for Zn(2+). Substrate is bound by residues E215 and D300. D300 contributes to the Zn(2+) binding site.

Belongs to the metallo-dependent hydrolases superfamily. MTA/SAH deaminase family. Zn(2+) is required as a cofactor.

The catalysed reaction is S-adenosyl-L-homocysteine + H2O + H(+) = S-inosyl-L-homocysteine + NH4(+). It carries out the reaction S-methyl-5'-thioadenosine + H2O + H(+) = S-methyl-5'-thioinosine + NH4(+). Functionally, catalyzes the deamination of 5-methylthioadenosine and S-adenosyl-L-homocysteine into 5-methylthioinosine and S-inosyl-L-homocysteine, respectively. Is also able to deaminate adenosine. This Acetivibrio thermocellus (strain ATCC 27405 / DSM 1237 / JCM 9322 / NBRC 103400 / NCIMB 10682 / NRRL B-4536 / VPI 7372) (Clostridium thermocellum) protein is 5-methylthioadenosine/S-adenosylhomocysteine deaminase.